The sequence spans 150 residues: Large ribosomal subunit protein bL9 (150 aa).

This sequence belongs to the bacterial ribosomal protein bL9 family.

In terms of biological role, binds to the 23S rRNA. This is Large ribosomal subunit protein bL9 from Burkholderia vietnamiensis (strain G4 / LMG 22486) (Burkholderia cepacia (strain R1808)).